The primary structure comprises 376 residues: Putative transcription factor egl-18 (376 aa).

4 disordered regions span residues 1–33 (MSIS…CSGC), 65–122 (NNEL…LPDF), 148–197 (MVQQ…SDIP), and 240–264 (ATPS…PNAA). The segment covering 9–27 (TRPESAEQQHHEVLQRPSD) has biased composition (basic and acidic residues). Composition is skewed to low complexity over residues 68–89 (LKSS…RSSP) and 165–175 (QQSVSPPQSKS). Over residues 176–195 (VKIEDPMDQDVKQEESERSD) the composition is skewed to basic and acidic residues. The span at 241–250 (TPSSQSQDSS) shows a compositional bias: polar residues. Residues 266 to 290 (CSNCRTDKTTAWRRDAEGKLVCNPC) form a GATA-type zinc finger.

As to expression, expressed in differentiated seam cells. Expressed in the head and trunk.

The protein resides in the nucleus. Its function is as follows. Probable transcription factor. Involved in embryonic development and in vulval development in larvae, acting redundantly, at least in part, with elt-6. Perhaps acting together with elt-6, may form a positive feedback loop to initiate and maintain lin-39 gene expression to ensure proper vulval precursor cell (VPC) fate specification. Together with elt-6, acts as a downstream target of the Wnt/beta-catenin asymmetry pathway, required to adopt or maintain the seam cell fate. Required in seam cells, acting redundantly with elt-6, to promote production of alae, expression of several seam-specific genes and maintenance of seam cells in an unfused state. Plays a role in longevity. May form a transcriptional circuit with GATA factors elt-3 and elt-6. The polypeptide is Putative transcription factor egl-18 (Caenorhabditis elegans).